Here is a 151-residue protein sequence, read N- to C-terminus: MSDSDTRKALNRAIGYLGIREHSRQEIRGKLKRNGFSDETIEKVLERLDTLNLLDDLSFARNFIRSRTRVKPSGLYKLRYELRQKGVPDDIAEEALREYDSAAQCLNAALKKMPFLKGDQEHRRKKLHTHLVNRGFDSQTIRQTLDELLTN.

Belongs to the RecX family.

The protein resides in the cytoplasm. Modulates RecA activity. This is Regulatory protein RecX from Prosthecochloris aestuarii (strain DSM 271 / SK 413).